The following is a 489-amino-acid chain: Toxin coregulated pilus biosynthesis outer membrane protein C (489 aa).

A signal peptide spans 1-16 (MKKTIISTLVIGLVSG). C17 carries N-palmitoyl cysteine lipidation. C17 carries S-diacylglycerol cysteine lipidation. Helical transmembrane passes span 174 to 190 (FSSS…SSGL), 294 to 308 (AISL…GASY), 402 to 417 (QLVS…LPTV), and 442 to 457 (NYIQ…GGGT).

Its subcellular location is the cell membrane. In terms of biological role, involved in TCP pilus biogenesis. The chain is Toxin coregulated pilus biosynthesis outer membrane protein C (tcpC) from Vibrio cholerae serotype O1 (strain ATCC 39315 / El Tor Inaba N16961).